The sequence spans 400 residues: MSRKLLLALTFLVVLGIAVVVMAATYELFLLFNSWLEGKPLGIVKISVETPKADGICFIAVHRFFTPINPTKAWNQTDVIYRGKVKCGESVVVKDTIRLMQVGARDVNGEVMPIYDSPEYAVVVVSKSGGFNRIIQTDIVKPITEVKVKAEFESGESARPAEAPSTSRTCKISSNPDACVLDVKLAYINSIPGLKTAFGLEGVRPSAMHVEGWGSSCISSEPDTACPPSAWRSGGKKLTISNVGEISDYVSDGQRAIVWGGVEYLYERHAVWDDEFEAYWKYEFFYPRAIGGLSTPQVVGSYTPPPTPPSYAAGPQNGSCEINFEKPYPSDTKLNLTAQAVLNIGEVSLSISISPYQSGDDRHPTPYLSIVDISGKGYPWYYWWYKNNDRMTYEVEFYGS.

Residues 1–23 form the signal peptide; that stretch reads MSRKLLLALTFLVVLGIAVVVMA.

This is an uncharacterized protein from Archaeoglobus fulgidus (strain ATCC 49558 / DSM 4304 / JCM 9628 / NBRC 100126 / VC-16).